The sequence spans 104 residues: L-rhamnose mutarotase (104 aa).

Residue Y18 coordinates substrate. Residue H22 is the Proton donor of the active site. Residues Y41 and 76 to 77 (WW) each bind substrate.

Belongs to the rhamnose mutarotase family. In terms of assembly, homodimer.

The protein localises to the cytoplasm. It carries out the reaction alpha-L-rhamnose = beta-L-rhamnose. It participates in carbohydrate metabolism; L-rhamnose metabolism. In terms of biological role, involved in the anomeric conversion of L-rhamnose. In Escherichia coli O8 (strain IAI1), this protein is L-rhamnose mutarotase.